A 497-amino-acid polypeptide reads, in one-letter code: Probable cytosol aminopeptidase (497 aa).

Mn(2+)-binding residues include lysine 267 and aspartate 272. Residue lysine 279 is part of the active site. Mn(2+) is bound by residues aspartate 290, aspartate 349, and glutamate 351. Arginine 353 is an active-site residue.

The protein belongs to the peptidase M17 family. Mn(2+) is required as a cofactor.

It localises to the cytoplasm. It carries out the reaction Release of an N-terminal amino acid, Xaa-|-Yaa-, in which Xaa is preferably Leu, but may be other amino acids including Pro although not Arg or Lys, and Yaa may be Pro. Amino acid amides and methyl esters are also readily hydrolyzed, but rates on arylamides are exceedingly low.. The catalysed reaction is Release of an N-terminal amino acid, preferentially leucine, but not glutamic or aspartic acids.. Its function is as follows. Presumably involved in the processing and regular turnover of intracellular proteins. Catalyzes the removal of unsubstituted N-terminal amino acids from various peptides. This Pseudomonas putida (strain ATCC 47054 / DSM 6125 / CFBP 8728 / NCIMB 11950 / KT2440) protein is Probable cytosol aminopeptidase.